The primary structure comprises 151 residues: Large ribosomal subunit protein bL9 (151 aa).

This sequence belongs to the bacterial ribosomal protein bL9 family.

Binds to the 23S rRNA. The protein is Large ribosomal subunit protein bL9 of Thermosipho africanus (strain TCF52B).